The sequence spans 258 residues: Glycerol-3-phosphate acyltransferase (258 aa).

The next 6 membrane-spanning stretches (helical) occupy residues 11 to 31 (IILA…IIIV), 62 to 82 (LVVA…AILL), 94 to 114 (SYFI…YYKF), 124 to 144 (LGLL…IWFI), 160 to 180 (ALII…YFIW), and 212 to 232 (WASG…ILAW).

Belongs to the PlsY family. In terms of assembly, probably interacts with PlsX.

It localises to the cell membrane. It carries out the reaction an acyl phosphate + sn-glycerol 3-phosphate = a 1-acyl-sn-glycero-3-phosphate + phosphate. Its pathway is lipid metabolism; phospholipid metabolism. Its function is as follows. Catalyzes the transfer of an acyl group from acyl-phosphate (acyl-PO(4)) to glycerol-3-phosphate (G3P) to form lysophosphatidic acid (LPA). This enzyme utilizes acyl-phosphate as fatty acyl donor, but not acyl-CoA or acyl-ACP. The sequence is that of Glycerol-3-phosphate acyltransferase from Mycoplasma mycoides subsp. mycoides SC (strain CCUG 32753 / NCTC 10114 / PG1).